The chain runs to 1877 residues: Transmembrane protein 131 (1877 aa).

A signal peptide spans 1-20 (MGKRAGGAAAAAAAASTSSA). Residues 21–1115 (AGLEPAAGRG…AEALPRPNWE (1095 aa)) are Lumenal-facing. A papD-L domain region spans residues 107-281 (RFEPPMLDFH…ETKGVMRASF (175 aa)). A helical transmembrane segment spans residues 1116–1136 (LALYIIISGVMSALFLLVIGT). The Cytoplasmic segment spans residues 1137–1877 (AYLEAQGIWE…WSNSHFPHEN (741 aa)). Over residues 1197-1227 (NASSRPGTGSHRQCGTSVHPHSSHGSKNSAD) the composition is skewed to polar residues. 4 disordered regions span residues 1197 to 1573 (NASS…SSST), 1590 to 1655 (LKQR…NPTF), 1679 to 1707 (SDFS…SPVS), and 1830 to 1852 (NSAA…TYNP). Over residues 1233 to 1258 (TRNSSSMSSRTSPQAAASQSTSKTSP) the composition is skewed to low complexity. The segment covering 1301–1311 (QPPPPVPQHQE) has biased composition (pro residues). Phosphoserine occurs at positions 1318 and 1338. 2 stretches are compositionally biased toward basic and acidic residues: residues 1326–1339 (SHPE…HSSE) and 1349–1360 (AMDKDFDHHDSS). Serine 1371 is subject to Phosphoserine. Basic residues predominate over residues 1376–1391 (SKGKGKSLQQRKAKPP). A compositionally biased stretch (basic and acidic residues) spans 1392-1414 (KKQEEKEKRGKGKPQEDELKDAL). The span at 1420–1432 (SSTTTETSNPDTE) shows a compositional bias: low complexity. Polar residues-rich tracts occupy residues 1507-1523 (TLAS…TKGT) and 1538-1550 (LPSS…TSSS). Residues 1599–1608 (PASPSLPTAP) show a composition bias toward pro residues. Over residues 1609 to 1646 (CPFTSRGSYSSVVNSSGSDTKAKQTSSSKSKLTKAASL) the composition is skewed to low complexity. Residues 1830–1839 (NSAAAHTPSA) show a composition bias toward polar residues. A phosphoserine mark is found at serine 1857 and serine 1865.

The protein belongs to the TMEM131 family. Interacts (via PapD-L domain) with COL1A2 (via C-terminus); the interaction is direct, may occur with other collagen proteins, and is involved in assembly and TRAPPIII ER-to-Golgi transport complex-dependent secretion of collagen. Interacts (via C-terminus) with TRAPPC8 (via C-terminus); the interaction is direct.

It is found in the membrane. Its function is as follows. Collagen binding transmembrane protein involved in collagen secretion by recruiting the ER-to-Golgi transport complex TRAPPIII. May play a role in the immune response to viral infection. The polypeptide is Transmembrane protein 131 (Mus musculus (Mouse)).